Consider the following 261-residue polypeptide: Phosphate import ATP-binding protein PstB (261 aa).

Residues 15-256 form the ABC transporter domain; that stretch reads LQVRRLNFYY…PAHQETENYI (242 aa). ATP is bound at residue 47 to 54; sequence GPSGCGKS.

It belongs to the ABC transporter superfamily. Phosphate importer (TC 3.A.1.7) family. The complex is composed of two ATP-binding proteins (PstB), two transmembrane proteins (PstC and PstA) and a solute-binding protein (PstS).

Its subcellular location is the cell inner membrane. It catalyses the reaction phosphate(out) + ATP + H2O = ADP + 2 phosphate(in) + H(+). In terms of biological role, part of the ABC transporter complex PstSACB involved in phosphate import. Responsible for energy coupling to the transport system. The polypeptide is Phosphate import ATP-binding protein PstB (Burkholderia sp).